The sequence spans 233 residues: Small ribosomal subunit protein uS2 (233 aa).

It belongs to the universal ribosomal protein uS2 family.

The polypeptide is Small ribosomal subunit protein uS2 (Bacillus cereus (strain G9842)).